A 356-amino-acid chain; its full sequence is MPIAKVHRIATASPDDVSGLAAAIATGAIAPAGILAIFGKTEGNGCVNDFSRGFAVQSLQMLLRGHMGAAADEVCLVMSGGTEGGMSPHFLVFERAEGNAPEAAPALAIGRAHTPDLPFEALGRMGQVRMVAQAVRRAMAAAGITDPEDVHFVQVKCPLLTAMRVKEAEARGATTATSDTLKSMGLSRGASALGIALALGEVAEDALSDAVICADYGLWSARASCSSGIELLGHEIVVLGMSEGWSGPLAIAHGVMADAIDVTPVKAALSALGAEAGEATIVLAKAEPSRSGRIRGKRHTMLDDSDISPTRHARAFVAGALAGVVGHTEIYVSGGGEHQGPDGGGPVAVIAARTMG.

The interval 1–99 (MPIAKVHRIA…FLVFERAEGN (99 aa)) is RU A. Substrate-binding positions include Arg-52 and 79-80 (SG). Residues 106–243 (ALAIGRAHTP…HEIVVLGMSE (138 aa)) are RU B. Residue Lys-156 is part of the active site. Substrate is bound by residues Arg-188 and 226-227 (SS). The active-site Nucleophile is Ser-226. The RU C stretch occupies residues 249–356 (LAIAHGVMAD…VAVIAARTMG (108 aa)). Glu-287 lines the Mg(2+) pocket. Substrate-binding positions include Arg-314 and 333 to 334 (SG). Mg(2+)-binding residues include Gly-336, Gln-339, Gly-340, Pro-341, and Gly-344.

Belongs to the cyclic amide hydrolase (CyAH) family. In terms of assembly, homotetramer.

It catalyses the reaction cyanurate + H2O = 1-carboxybiuret + H(+). It functions in the pathway xenobiotic degradation; atrazine degradation; biuret from cyanurate: step 1/1. With respect to regulation, inhibited by barbituric acid. In terms of biological role, responsible for the hydrolysis of cyanuric acid, an intermediate formed during catabolism of s-triazine based compounds in herbicides such as atrazine and polymers such as melamine. Catalyzes the hydrolytic opening of the s-triazine ring of cyanuric acid (2,4,6-trihydroxy-s-triazine) to yield carbon dioxide and carboxybiuret, which spontaneously decarboxylates to biuret. The protein is Cyanuric acid amidohydrolase of Azorhizobium caulinodans (strain ATCC 43989 / DSM 5975 / JCM 20966 / LMG 6465 / NBRC 14845 / NCIMB 13405 / ORS 571).